The following is a 513-amino-acid chain: Cytochrome P450 86A1 (513 aa).

Residues 7–27 (ILTGYAVAALSVYALWFYFLS) traverse the membrane as a helical segment. Residue Cys-456 participates in heme binding.

This sequence belongs to the cytochrome P450 family. It depends on heme as a cofactor. Expressed in roots.

Its subcellular location is the membrane. The catalysed reaction is an omega-methyl-long-chain fatty acid + reduced [NADPH--hemoprotein reductase] + O2 = an omega-hydroxy-long-chain fatty acid + oxidized [NADPH--hemoprotein reductase] + H2O + H(+). Catalyzes the omega-hydroxylation of various fatty acids (FA). Acts on saturated and unsaturated fatty acids with chain lengths from C12 to C18 but not on hexadecane. The chain is Cytochrome P450 86A1 (CYP86A1) from Arabidopsis thaliana (Mouse-ear cress).